A 406-amino-acid chain; its full sequence is Peptidase T (406 aa).

Zn(2+) is bound at residue His82. Asp84 is an active-site residue. Zn(2+) is bound at residue Asp142. The Proton acceptor role is filled by Glu176. Positions 177, 199, and 381 each coordinate Zn(2+).

This sequence belongs to the peptidase M20B family. Requires Zn(2+) as cofactor.

The protein resides in the cytoplasm. The catalysed reaction is Release of the N-terminal residue from a tripeptide.. Cleaves the N-terminal amino acid of tripeptides. This Streptococcus agalactiae serotype III (strain NEM316) protein is Peptidase T.